Consider the following 346-residue polypeptide: Uroporphyrinogen decarboxylase (346 aa).

Substrate-binding positions include 26-30 (RQAGR), D76, Y153, S208, and H323.

Belongs to the uroporphyrinogen decarboxylase family. In terms of assembly, homodimer.

It localises to the cytoplasm. It catalyses the reaction uroporphyrinogen III + 4 H(+) = coproporphyrinogen III + 4 CO2. It participates in porphyrin-containing compound metabolism; protoporphyrin-IX biosynthesis; coproporphyrinogen-III from 5-aminolevulinate: step 4/4. Functionally, catalyzes the decarboxylation of four acetate groups of uroporphyrinogen-III to yield coproporphyrinogen-III. The sequence is that of Uroporphyrinogen decarboxylase from Prochlorococcus marinus (strain MIT 9312).